The chain runs to 245 residues: Ubiquinone/menaquinone biosynthesis C-methyltransferase UbiE (245 aa).

S-adenosyl-L-methionine is bound by residues threonine 71, aspartate 92, and 118–119 (DA).

It belongs to the class I-like SAM-binding methyltransferase superfamily. MenG/UbiE family.

It carries out the reaction a 2-demethylmenaquinol + S-adenosyl-L-methionine = a menaquinol + S-adenosyl-L-homocysteine + H(+). The enzyme catalyses a 2-methoxy-6-(all-trans-polyprenyl)benzene-1,4-diol + S-adenosyl-L-methionine = a 5-methoxy-2-methyl-3-(all-trans-polyprenyl)benzene-1,4-diol + S-adenosyl-L-homocysteine + H(+). It participates in quinol/quinone metabolism; menaquinone biosynthesis; menaquinol from 1,4-dihydroxy-2-naphthoate: step 2/2. Its pathway is cofactor biosynthesis; ubiquinone biosynthesis. In terms of biological role, methyltransferase required for the conversion of demethylmenaquinol (DMKH2) to menaquinol (MKH2) and the conversion of 2-polyprenyl-6-methoxy-1,4-benzoquinol (DDMQH2) to 2-polyprenyl-3-methyl-6-methoxy-1,4-benzoquinol (DMQH2). This chain is Ubiquinone/menaquinone biosynthesis C-methyltransferase UbiE, found in Neisseria meningitidis serogroup A / serotype 4A (strain DSM 15465 / Z2491).